Reading from the N-terminus, the 249-residue chain is Hydroxyacylglutathione hydrolase (249 aa).

Zn(2+)-binding residues include H54, H56, D58, H59, H113, D138, and H176.

It belongs to the metallo-beta-lactamase superfamily. Glyoxalase II family. Monomer. Zn(2+) is required as a cofactor.

It catalyses the reaction an S-(2-hydroxyacyl)glutathione + H2O = a 2-hydroxy carboxylate + glutathione + H(+). It participates in secondary metabolite metabolism; methylglyoxal degradation; (R)-lactate from methylglyoxal: step 2/2. In terms of biological role, thiolesterase that catalyzes the hydrolysis of S-D-lactoyl-glutathione to form glutathione and D-lactic acid. In Synechococcus sp. (strain CC9605), this protein is Hydroxyacylglutathione hydrolase.